The chain runs to 901 residues: Glutamate receptor 2.1 (901 aa).

The first 25 residues, 1 to 25, serve as a signal peptide directing secretion; the sequence is MKRENNLVLSLLFFVIVFLMQVGEA. At 26–574 the chain is on the extracellular side; the sequence is QNRITNVNVG…SSTIFLMPLT (549 aa). Asparagine 46, asparagine 53, asparagine 204, asparagine 267, asparagine 331, asparagine 342, asparagine 461, asparagine 477, and asparagine 536 each carry an N-linked (GlcNAc...) asparagine glycan. A helical transmembrane segment spans residues 575 to 595; it reads LALWLISLLSFFIIGLVVWVL. Over 596–604 the chain is Cytoplasmic; it reads EHRVNPDFD. The chain crosses the membrane as a helical span at residues 605-625; sequence GPGQYQLSTIFWFSFSIMVFA. The Cytoplasmic portion of the chain corresponds to 626–629; sequence PRER. The helical transmembrane segment at 630-650 threads the bilayer; the sequence is VLSFWARVVVIIWYFLVLVLT. Over 651–823 the chain is Extracellular; the sequence is QSYTASLASL…VSFRQLGFDS (173 aa). The chain crosses the membrane as a helical span at residues 824-844; sequence FWVLFLVAAIVCTMALLKFVY. At 845 to 901 the chain is on the cytoplasmic side; that stretch reads QFLKENPNQRNLRVLWEKFNEPDQKSYIKDVTKCQCSSGQGMPKNGQEGANAVNNGN.

It belongs to the glutamate-gated ion channel (TC 1.A.10.1) family. May form heteromers. As to expression, expressed predominantly in roots. First strongly detected in all cell types of the root except at the apex. Later expressed at the root-shoot junction.

The protein localises to the membrane. Functionally, glutamate-gated receptor that probably acts as a non-selective cation channel. May be involved in light-signal transduction and calcium homeostasis via the regulation of calcium influx into cells. This chain is Glutamate receptor 2.1 (GLR2.1), found in Arabidopsis thaliana (Mouse-ear cress).